We begin with the raw amino-acid sequence, 81 residues long: MSILSSLISISISSPSKNSTVSSNNNYYSAVSMEGITIASSHIKTISYTSPKSSNTRAYSPTGYGYSYSYSYGYSSCGYNF.

This sequence belongs to the hssA/B family.

This chain is HssA/B-like protein 5 (hssl5), found in Dictyostelium discoideum (Social amoeba).